A 64-amino-acid chain; its full sequence is Palmitoyl-CoA hydrolase (64 aa).

It belongs to the type-B carboxylesterase/lipase family. Monomer and homotrimer.

The protein resides in the microsome. The protein localises to the endoplasmic reticulum. The catalysed reaction is hexadecanoyl-CoA + H2O = hexadecanoate + CoA + H(+). Functionally, hydrolysis of a variety of CoA thioesters of long-chain fatty acids. The chain is Palmitoyl-CoA hydrolase from Rattus norvegicus (Rat).